We begin with the raw amino-acid sequence, 429 residues long: Mannose-6-phosphate isomerase (429 aa).

Residues Gln-110, His-112, Glu-137, and His-282 each contribute to the Zn(2+) site. The active site involves Arg-301.

This sequence belongs to the mannose-6-phosphate isomerase type 1 family. Zn(2+) is required as a cofactor.

The protein resides in the cytoplasm. It carries out the reaction D-mannose 6-phosphate = D-fructose 6-phosphate. Its pathway is nucleotide-sugar biosynthesis; GDP-alpha-D-mannose biosynthesis; alpha-D-mannose 1-phosphate from D-fructose 6-phosphate: step 1/2. In terms of biological role, involved in the synthesis of the GDP-mannose and dolichol-phosphate-mannose required for a number of critical mannosyl transfer reactions. In Candida glabrata (strain ATCC 2001 / BCRC 20586 / JCM 3761 / NBRC 0622 / NRRL Y-65 / CBS 138) (Yeast), this protein is Mannose-6-phosphate isomerase (PMI1).